Here is a 72-residue protein sequence, read N- to C-terminus: NAD(P)H-quinone oxidoreductase subunit O (72 aa).

This sequence belongs to the complex I NdhO subunit family. NDH-1 can be composed of about 15 different subunits; different subcomplexes with different compositions have been identified which probably have different functions.

It is found in the cellular thylakoid membrane. It carries out the reaction a plastoquinone + NADH + (n+1) H(+)(in) = a plastoquinol + NAD(+) + n H(+)(out). The catalysed reaction is a plastoquinone + NADPH + (n+1) H(+)(in) = a plastoquinol + NADP(+) + n H(+)(out). Its function is as follows. NDH-1 shuttles electrons from an unknown electron donor, via FMN and iron-sulfur (Fe-S) centers, to quinones in the respiratory and/or the photosynthetic chain. The immediate electron acceptor for the enzyme in this species is believed to be plastoquinone. Couples the redox reaction to proton translocation, and thus conserves the redox energy in a proton gradient. Cyanobacterial NDH-1 also plays a role in inorganic carbon-concentration. The polypeptide is NAD(P)H-quinone oxidoreductase subunit O (Synechococcus sp. (strain JA-3-3Ab) (Cyanobacteria bacterium Yellowstone A-Prime)).